The primary structure comprises 161 residues: Regulator of ribonuclease activity A (161 aa).

It belongs to the RraA family. Homotrimer. Binds to both RNA-binding sites in the C-terminal region of Rne and to RhlB.

The protein localises to the cytoplasm. Its function is as follows. Globally modulates RNA abundance by binding to RNase E (Rne) and regulating its endonucleolytic activity. Can modulate Rne action in a substrate-dependent manner by altering the composition of the degradosome. Modulates RNA-binding and helicase activities of the degradosome. The sequence is that of Regulator of ribonuclease activity A from Edwardsiella ictaluri (strain 93-146).